Consider the following 380-residue polypeptide: Peptide chain release factor 1-like, mitochondrial (380 aa).

The transit peptide at 1–26 (MRSRVLWGAARWLWPRRAVGPARRPL) directs the protein to the mitochondrion. Positions 63 to 117 (ELLAVIKLLNEKERELRETEHLLHDENEDLRKLAENEITLCQKEITQLKHQIILL) form a coiled coil. Residues 236–300 (PKDLRIDTKR…LRAKLYSMHL (65 aa)) are GGQ domain. The GGQ motif lies at 250 to 252 (GGQ). N5-methylglutamine is present on glutamine 252.

It belongs to the prokaryotic/mitochondrial release factor family. Post-translationally, methylation of glutamine in the GGQ triplet by HEMK1 is conserved from bacteria to mammals. Expressed in skeletal muscle (at protein level).

It is found in the mitochondrion. Mitochondrial peptide chain release factor that directs the termination of translation in response to the peptide chain termination codons UAA and UAG. The chain is Peptide chain release factor 1-like, mitochondrial from Homo sapiens (Human).